Consider the following 180-residue polypeptide: ATP-dependent protease subunit HslV (180 aa).

The active site involves Thr-8. Na(+)-binding residues include Gly-165, Asp-168, and Thr-171.

The protein belongs to the peptidase T1B family. HslV subfamily. A double ring-shaped homohexamer of HslV is capped on each side by a ring-shaped HslU homohexamer. The assembly of the HslU/HslV complex is dependent on binding of ATP.

It localises to the cytoplasm. The catalysed reaction is ATP-dependent cleavage of peptide bonds with broad specificity.. Allosterically activated by HslU binding. Protease subunit of a proteasome-like degradation complex believed to be a general protein degrading machinery. The polypeptide is ATP-dependent protease subunit HslV (Lactiplantibacillus plantarum (strain ATCC BAA-793 / NCIMB 8826 / WCFS1) (Lactobacillus plantarum)).